A 214-amino-acid polypeptide reads, in one-letter code: Anti-sigma-F factor NrsF (214 aa).

Residues methionine 1–arginine 25 are Cytoplasmic-facing. Residues leucine 26 to glutamine 46 traverse the membrane as a helical segment. Over alanine 47–glutamine 53 the chain is Periplasmic. A helical transmembrane segment spans residues alanine 54–glycine 74. The Cytoplasmic segment spans residues tyrosine 75 to arginine 90. A helical membrane pass occupies residues glycine 91–isoleucine 111. Residues threonine 112–arginine 134 are Periplasmic-facing. Residues isoleucine 135 to proline 155 traverse the membrane as a helical segment. Topologically, residues threonine 156–proline 158 are cytoplasmic. The helical transmembrane segment at glycine 159 to leucine 179 threads the bilayer. Topologically, residues histidine 180 to threonine 185 are periplasmic. Residues phenylalanine 186 to tryptophan 206 form a helical membrane-spanning segment. Residues alanine 207 to tryptophan 214 are Cytoplasmic-facing.

The protein belongs to the NrsF anti-sigma-F factor family.

It is found in the cell inner membrane. Functionally, an anti-sigma factor for extracytoplasmic function (ECF) sigma factor sigma-F (SigF), which responds to chromate and cadmium. Overexpression leads to loss of response to dichromate. ECF sigma factors are held in an inactive form by a cognate anti-sigma factor. In Caulobacter vibrioides (strain NA1000 / CB15N) (Caulobacter crescentus), this protein is Anti-sigma-F factor NrsF.